The primary structure comprises 308 residues: Elongation factor Ts (308 aa).

Positions Thr80–Val83 are involved in Mg(2+) ion dislocation from EF-Tu.

This sequence belongs to the EF-Ts family.

The protein resides in the cytoplasm. Associates with the EF-Tu.GDP complex and induces the exchange of GDP to GTP. It remains bound to the aminoacyl-tRNA.EF-Tu.GTP complex up to the GTP hydrolysis stage on the ribosome. This chain is Elongation factor Ts, found in Parvibaculum lavamentivorans (strain DS-1 / DSM 13023 / NCIMB 13966).